The chain runs to 142 residues: Large ribosomal subunit protein uL13 (142 aa).

This sequence belongs to the universal ribosomal protein uL13 family. In terms of assembly, part of the 50S ribosomal subunit.

This protein is one of the early assembly proteins of the 50S ribosomal subunit, although it is not seen to bind rRNA by itself. It is important during the early stages of 50S assembly. In Laribacter hongkongensis (strain HLHK9), this protein is Large ribosomal subunit protein uL13.